The sequence spans 151 residues: UPF0178 protein RD1_0321 (151 aa).

The protein belongs to the UPF0178 family.

In Roseobacter denitrificans (strain ATCC 33942 / OCh 114) (Erythrobacter sp. (strain OCh 114)), this protein is UPF0178 protein RD1_0321.